Here is a 433-residue protein sequence, read N- to C-terminus: Histidinol dehydrogenase (433 aa).

Residues Ser236, Gln258, and His261 each coordinate substrate. Residues Gln258 and His261 each contribute to the Zn(2+) site. Catalysis depends on proton acceptor residues Glu325 and His326. The substrate site is built by His326, Asp359, Glu413, and His418. Asp359 contacts Zn(2+). His418 is a Zn(2+) binding site.

The protein belongs to the histidinol dehydrogenase family. Requires Zn(2+) as cofactor.

It catalyses the reaction L-histidinol + 2 NAD(+) + H2O = L-histidine + 2 NADH + 3 H(+). It functions in the pathway amino-acid biosynthesis; L-histidine biosynthesis; L-histidine from 5-phospho-alpha-D-ribose 1-diphosphate: step 9/9. Functionally, catalyzes the sequential NAD-dependent oxidations of L-histidinol to L-histidinaldehyde and then to L-histidine. The protein is Histidinol dehydrogenase of Pseudoalteromonas translucida (strain TAC 125).